The chain runs to 1849 residues: SH3 and multiple ankyrin repeat domains protein 2 (1849 aa).

Positions 1 to 33 (MPRSPTSSEDEMAQSFSDYSVGSESDSSKEETI) are disordered. Low complexity predominate over residues 15–25 (SFSDYSVGSES). ANK repeat units follow at residues 196–226 (TGET…HLDF), 230–259 (DGMT…SPDY), 263–293 (YGLT…TVCC), 297–326 (NGWH…DMSA), 330–359 (SGNT…NKEL), and 363–393 (NSQT…DIVP). Residues 451-493 (QQMPSKPEGAAKTIGSYVPGPRSRSPSLNRLGGAGEDGKRPQP) form a disordered region. Residues 526 to 585 (VPGRLFVAVKPYQPQVDGEIPLHRGDRVKVLSIGEGGFWEGSARGHIGWFPAECVEEVQC) enclose the SH3 domain. The PDZ domain maps to 626-720 (TVVLQKKDNE…HLVLKVVTVT (95 aa)). Over residues 764–774 (SVRKKKDKPEE) the composition is skewed to basic and acidic residues. The tract at residues 764 to 808 (SVRKKKDKPEEIVPASKPSRAAENMAVEPRVATIKQRPSSRCFPA) is disordered. Ser831 carries the post-translational modification Phosphoserine. Thr860 bears the Phosphothreonine mark. Residues 878–910 (LSMPDTSEDIPPPPQSVPPSPPPPSPTTYNCPK) are disordered. Over residues 887–903 (IPPPPQSVPPSPPPPSP) the composition is skewed to pro residues. Ser960 is subject to Phosphoserine. Disordered regions lie at residues 1013 to 1293 (LVKQ…RKGD), 1328 to 1371 (LQEE…TTVP), 1432 to 1526 (PALS…GGEN), and 1574 to 1594 (SFVI…PGMA). A compositionally biased stretch (low complexity) spans 1040–1052 (STSSSGKSSQGSS). The span at 1086–1097 (VRDREKRLEARR) shows a compositional bias: basic and acidic residues. Ser1099 carries the phosphoserine modification. The segment covering 1128–1138 (EEGDFADEDSA) has biased composition (acidic residues). Low complexity-rich tracts occupy residues 1159–1170 (GGAEASAPGEAG), 1181–1199 (GPES…AGPG), and 1208–1221 (RLLD…LALS). The span at 1274-1293 (RRQETENKYETDLGRDRKGD) shows a compositional bias: basic and acidic residues. Thr1278 carries the phosphothreonine modification. The SH3-binding signature appears at 1327 to 1333 (ALQEEDE). The span at 1343 to 1357 (SSPSEVPEGVSETEG) shows a compositional bias: low complexity. A compositionally biased stretch (polar residues) spans 1445-1460 (TPQSPSLNSSQPTNSA). Residues 1494–1505 (VDSRSSSDHHLE) show a composition bias toward basic and acidic residues. A compositionally biased stretch (low complexity) spans 1506–1522 (TTSTISTVSSISTLSSE). The span at 1577–1588 (IPPPAPPPPPGS) shows a compositional bias: pro residues. A glycan (O-linked (GlcNAc) threonine) is linked at Thr1667. Residues 1678-1692 (FTVRPGTSQPITLQS) show a composition bias toward polar residues. Residues 1678 to 1776 (FTVRPGTSQP…SILQQPISNK (99 aa)) are disordered. Phosphoserine occurs at positions 1709 and 1713. Low complexity-rich tracts occupy residues 1721–1738 (TLPA…PALS) and 1760–1774 (RSRS…QPIS). An SAM domain is found at 1786–1849 (WTKPDVADWL…ERALKQLLDR (64 aa)).

The protein belongs to the SHANK family. As to quaternary structure, is part of a complex with DLG4/PSD-95 and DLGAP1/GKAP. Interacts with CTTN/cortactin SH3 domain, DLGAP1/GKAP and alpha-latrotoxin receptor 1. Interacts with DNM2, DBNL, GRID2, BAIAP2, SLC9A3, PLCB3 and CFTR. Interacts (via proline-rich region) with PDE4D. Interacts with ABI1 (via SH3 domain). In terms of tissue distribution, isoform 3 is present in epithelial colonic cells (at protein level).

Its subcellular location is the apical cell membrane. It localises to the cytoplasm. The protein resides in the synapse. The protein localises to the postsynaptic density. It is found in the cell projection. Its subcellular location is the growth cone. It localises to the dendritic spine. Its function is as follows. Seems to be an adapter protein in the postsynaptic density (PSD) of excitatory synapses that interconnects receptors of the postsynaptic membrane including NMDA-type and metabotropic glutamate receptors, and the actin-based cytoskeleton. May play a role in the structural and functional organization of the dendritic spine and synaptic junction. This Homo sapiens (Human) protein is SH3 and multiple ankyrin repeat domains protein 2 (SHANK2).